Reading from the N-terminus, the 869-residue chain is Probable beta-glucosidase F (869 aa).

An N-terminal signal peptide occupies residues 1-19; it reads MRVLSAIALVASLASSALS. N-linked (GlcNAc...) asparagine glycosylation is found at Asn77 and Asn261. The active site involves Asp289. Asn332, Asn364, Asn399, and Asn478 each carry an N-linked (GlcNAc...) asparagine glycan. A disordered region spans residues 677–697; sequence STYPPTRPPKGPTPTYPTAIP. Positions 681–691 are enriched in pro residues; the sequence is PTRPPKGPTPT. N-linked (GlcNAc...) asparagine glycosylation is present at Asn728.

This sequence belongs to the glycosyl hydrolase 3 family.

It localises to the secreted. It catalyses the reaction Hydrolysis of terminal, non-reducing beta-D-glucosyl residues with release of beta-D-glucose.. It participates in glycan metabolism; cellulose degradation. Its function is as follows. Beta-glucosidases are one of a number of cellulolytic enzymes involved in the degradation of cellulosic biomass. Catalyzes the last step releasing glucose from the inhibitory cellobiose. The chain is Probable beta-glucosidase F (bglF) from Aspergillus fumigatus (strain ATCC MYA-4609 / CBS 101355 / FGSC A1100 / Af293) (Neosartorya fumigata).